We begin with the raw amino-acid sequence, 287 residues long: Probable ketose 3-epimerase (287 aa).

E152 acts as the Proton donor/acceptor in catalysis. E152 and D185 together coordinate Mn(2+). H188 contacts substrate. H211 is a binding site for Mn(2+). Residue R217 coordinates substrate. E246 functions as the Proton donor/acceptor in the catalytic mechanism. Residue E246 participates in Mn(2+) binding.

This sequence belongs to the hyi family. The cofactor is Mn(2+).

Probably catalyzes the epimerization of ketopentoses and/or ketohexoses at the C3 position. This chain is Probable ketose 3-epimerase, found in Synechocystis sp. (strain ATCC 27184 / PCC 6803 / Kazusa).